Here is a 330-residue protein sequence, read N- to C-terminus: Src kinase-associated phosphoprotein 2-B (330 aa).

The segment at 57–84 is disordered; the sequence is DKAEDDDQEENDGFPLPPDAVSLASDRD. Over residues 59–68 the composition is skewed to acidic residues; the sequence is AEDDDQEEND. The PH domain occupies 105-208; that stretch reads EYLKAGYLEK…WINAIMNSRG (104 aa). Residues 236–261 form a disordered region; the sequence is ELPEESEKPVTETETQKATPVPVNNT. A compositionally biased stretch (basic and acidic residues) spans 240-250; the sequence is ESEKPVTETET. A compositionally biased stretch (polar residues) spans 251 to 261; that stretch reads QKATPVPVNNT. Residues 268 to 329 form the SH3 domain; the sequence is DYANFYRGLW…PKAYIIEMYD (62 aa).

This sequence belongs to the SKAP family. Post-translationally, phosphorylated on tyrosines.

It localises to the cytoplasm. May be involved in B-cell and macrophage adhesion processes. May play a role in src signaling pathway. The polypeptide is Src kinase-associated phosphoprotein 2-B (skap2-b) (Xenopus laevis (African clawed frog)).